The following is a 512-amino-acid chain: Glycerol kinase 1 (512 aa).

Residue threonine 18 coordinates ADP. Residues threonine 18, threonine 19, and serine 20 each contribute to the ATP site. Threonine 18 is a binding site for sn-glycerol 3-phosphate. Residue arginine 22 coordinates ADP. 4 residues coordinate sn-glycerol 3-phosphate: arginine 88, glutamate 89, tyrosine 140, and aspartate 255. Glycerol contacts are provided by arginine 88, glutamate 89, tyrosine 140, aspartate 255, and glutamine 256. ADP-binding residues include threonine 277 and glycine 321. Residues threonine 277, glycine 321, glutamine 325, and glycine 422 each coordinate ATP. ADP is bound by residues glycine 422 and asparagine 426.

Belongs to the FGGY kinase family.

The enzyme catalyses glycerol + ATP = sn-glycerol 3-phosphate + ADP + H(+). The protein operates within polyol metabolism; glycerol degradation via glycerol kinase pathway; sn-glycerol 3-phosphate from glycerol: step 1/1. Inhibited by fructose 1,6-bisphosphate (FBP). In terms of biological role, key enzyme in the regulation of glycerol uptake and metabolism. Catalyzes the phosphorylation of glycerol to yield sn-glycerol 3-phosphate. The chain is Glycerol kinase 1 from Streptomyces avermitilis (strain ATCC 31267 / DSM 46492 / JCM 5070 / NBRC 14893 / NCIMB 12804 / NRRL 8165 / MA-4680).